We begin with the raw amino-acid sequence, 407 residues long: uncharacterized protein (407 aa).

The disordered stretch occupies residues 145–231 (EANRFGRSNS…DPLTSITSDT (87 aa)). Over residues 158-175 (SNSRSKSSRSRSNNRSKS) the composition is skewed to basic residues. Over residues 176–196 (SRSSSTQSKSNNRSNSRSNSK) the composition is skewed to low complexity. Residues 271–407 (IVFETLDQND…NHKIHMEKDI (137 aa)) enclose the N-acetyltransferase domain.

The protein localises to the virion. This is an uncharacterized protein from Acanthamoeba polyphaga (Amoeba).